The sequence spans 215 residues: Oligoribonuclease (215 aa).

Residues 5–170 (LVWIDCEMTG…ADIHESIREL (166 aa)) form the Exonuclease domain. Y127 is a catalytic residue.

This sequence belongs to the oligoribonuclease family.

The protein localises to the cytoplasm. Its function is as follows. 3'-to-5' exoribonuclease specific for small oligoribonucleotides. The protein is Oligoribonuclease of Mycobacterium leprae (strain TN).